Reading from the N-terminus, the 277-residue chain is MAAGRFLLRRLRASFRSPLRNALVDAPHARAMHDGGGPRRLCIEGNIAVGKSTFVKLLMKTHPEWQVATEPIAEWQNIQAAGAQKDGTSKRLGNLLEMMYQEPARWSYTFQTLSFMSRLKVQLEPIPGRLLQAEKSVRVFERSVYSDRYIFAKNLFENGSLSDIEWHIYQDWHSFLLQEFANRLLLHGFIYLQASPQVCMERLYQRDREEEKGIELAYLQQLHSQHEDWFINKTTKLHFEALQHVPVLVLDVTEDFSENAARQEELMGQVNTFMRNL.

Residues 1–39 (MAAGRFLLRRLRASFRSPLRNALVDAPHARAMHDGGGPR) constitute a mitochondrion transit peptide. 45–53 (GNIAVGKST) lines the ATP pocket. Substrate contacts are provided by Glu-70, Tyr-100, Gln-111, and Arg-118. Glu-141 functions as the Proton acceptor in the catalytic mechanism. The substrate site is built by Arg-142 and Asp-147. 206 to 208 (RDR) contributes to the ATP binding site. Glu-211 is a substrate binding site. 254 to 256 (EDF) is an ATP binding site.

Belongs to the DCK/DGK family. In terms of assembly, homodimer. As to expression, spleen and thymus. Expressed at much lower levels in the brain and liver.

It localises to the mitochondrion. The protein resides in the cytoplasm. It catalyses the reaction 2'-deoxyguanosine + ATP = dGMP + ADP + H(+). The enzyme catalyses 2'-deoxyadenosine + ATP = dAMP + ADP + H(+). In terms of biological role, phosphorylates deoxyguanosine and deoxyadenosine in the mitochondrial matrix, with the highest efficiency for deoxyguanosine. In non-replicating cells, where cytosolic dNTP synthesis is down-regulated, mtDNA synthesis depends solely on DGUOK and TK2. Phosphorylates certain nucleoside analogs. Widely used as target of antiviral and chemotherapeutic agents. The sequence is that of Deoxyguanosine kinase, mitochondrial (Dguok) from Mus musculus (Mouse).